A 249-amino-acid chain; its full sequence is Metallo-beta-lactamase type 2 (249 aa).

An N-terminal signal peptide occupies residues 1-18 (MKTVFILISMLFPVAVMA). The Zn(2+) site is built by H99, H101, D103, H162, and C181. The substrate site is built by K184 and N193. H223 lines the Zn(2+) pocket.

It belongs to the metallo-beta-lactamase superfamily. Class-B beta-lactamase family. Monomer. Zn(2+) serves as cofactor.

It is found in the periplasm. It carries out the reaction a beta-lactam + H2O = a substituted beta-amino acid. Its activity is regulated as follows. Competitively inhibited by 4-morpholineethanesulfonic acid (MES), SB236050 and biphenyl tetrazoles (BPTs). Also inhibited by chelating agents such as EDTA and 1,10-phenanthroline. CcrA is not susceptible to inactivation by the beta-lactamase-blocking agents clavulanic acid or tazobactam. Functionally, confers resistance to the different beta-lactams antibiotics (penicillin, cephalosporin and carbapenem) via the hydrolysis of the beta-lactam ring. In Bacteroides fragilis, this protein is Metallo-beta-lactamase type 2.